The primary structure comprises 134 residues: Small ribosomal subunit protein bS6 (134 aa).

Residues 99–134 (PSQLAKSADEKRARKAPRSENFDNDQDDESNDDSDE) form a disordered region. Basic and acidic residues predominate over residues 105-119 (SADEKRARKAPRSEN). Positions 120–134 (FDNDQDDESNDDSDE) are enriched in acidic residues.

The protein belongs to the bacterial ribosomal protein bS6 family.

Binds together with bS18 to 16S ribosomal RNA. The polypeptide is Small ribosomal subunit protein bS6 (Psychrobacter sp. (strain PRwf-1)).